A 304-amino-acid chain; its full sequence is Opsin-1 (304 aa).

Over 1-45 (MIHPEQVADMLRPTTSTTSSHVPGPVPTVVPTPTEYQTLGETGHR) the chain is Extracellular. The helical transmembrane segment at 46–66 (TLWVTFALMVLSSGIFALLSW) threads the bilayer. A helical membrane pass occupies residues 74–94 (LFHVITTLITVVASLSYFAMA). The helical transmembrane segment at 129–149 (YVDWALTTPLLLLELCLLAGV) threads the bilayer. A helical membrane pass occupies residues 154 to 174 (TLMAIVADVIMVLCGLFAALG). The chain crosses the membrane as a helical span at residues 183-203 (WGWYTIGCFSYLFVIWHVALH). A helical membrane pass occupies residues 219–239 (FTGLAVFALLLWTAYPIIWGI). Residues 252-272 (ILIYTVLDLLAKPVFGFWLLL) traverse the membrane as a helical segment. Lys263 is subject to N6-(retinylidene)lysine. At 273–304 (SHRAMPETNIDLPGYWSHGLATEGRIRIGEED) the chain is on the cytoplasmic side.

The protein belongs to the archaeal/bacterial/fungal opsin family. Binds all-trans retinal via a protonated Schiff base linkage.

The protein resides in the membrane. Could facilitate a sensory photoresponse. This chain is Opsin-1 (nop-1), found in Neurospora crassa (strain ATCC 24698 / 74-OR23-1A / CBS 708.71 / DSM 1257 / FGSC 987).